The chain runs to 458 residues: Bifunctional thioredoxin reductase/thioredoxin (458 aa).

The interval 1-321 is thioredoxin reductase; that stretch reads MNTTPSAHET…LAEHAGSKAN (321 aa). Residues 19 to 22, 41 to 48, N57, and V90 contribute to the FAD site; these read SGPA and EGTSFGGA. Cysteines 142 and 145 form a disulfide. NADP(+)-binding residues include S163, H182, R188, I245, and Y265. FAD is bound by residues D285 and 292–295; that span reads RQAI. NADP(+) is bound at residue R292. The tract at residues 322–347 is linker; that stretch reads ETTEETGDVDSTDTTDWSTAMTDAKN. In terms of domain architecture, Thioredoxin spans 341-455; the sequence is AMTDAKNAGV…LLRDLSDVVP (115 aa). A disulfide bridge connects residues C379 and C382.

In the N-terminal section; belongs to the class-II pyridine nucleotide-disulfide oxidoreductase family. Homodimer. FAD serves as cofactor.

The protein localises to the cytoplasm. It carries out the reaction [thioredoxin]-dithiol + NADP(+) = [thioredoxin]-disulfide + NADPH + H(+). The chain is Bifunctional thioredoxin reductase/thioredoxin (trxB/A) from Mycobacterium leprae (strain TN).